The following is a 202-amino-acid chain: Small ribosomal subunit protein uS4c (202 aa).

In terms of domain architecture, S4 RNA-binding spans 90 to 153; that stretch reads MRLDNVTFRL…KSETIISKNI (64 aa).

Belongs to the universal ribosomal protein uS4 family. Part of the 30S ribosomal subunit. Contacts protein S5. The interaction surface between S4 and S5 is involved in control of translational fidelity.

It localises to the plastid. It is found in the chloroplast. One of the primary rRNA binding proteins, it binds directly to 16S rRNA where it nucleates assembly of the body of the 30S subunit. Functionally, with S5 and S12 plays an important role in translational accuracy. The sequence is that of Small ribosomal subunit protein uS4c (rps4) from Hypnum cupressiforme (Cypress-leaved plait-moss).